Here is a 1244-residue protein sequence, read N- to C-terminus: MQKSVRYNEGHALFLSVIARKEGTKRGYLSKKTTENSKWHEKFFALYQNVLFYFDTDQSARPSGIYLLEGCTCERVPALKVSTVGKDALDKLQYFLVVFGHDGQKPLELRTEEESDCDEWVEAIQQASYSDIIIEREVLMQKYIHLVQIVETEKVAANQLRTQLEDQDTEIERLKAEIIALNKTKERMRPYHVFQEEEDPDIKKIKKVQSFMRGWLCRRKWKIIVQDYICSPHAESMRKRNQIVFNMVEAETEYVHQLSILVNCFLRPLRMAASSKKPPISHDDVSSIFLNSETIMFLHEIFHQGLKARIANWPTLVLADLFDILLPMLNIYQEFVRNHQYSLQVLANCKQNRDFDKLLKQYESNAACEGRMLETFLTYPMFQIPRYIITLHELLAHTPHEHVERKSLEFAKSKLEELSRVMHDEVSDTENIRKNLAIERMIVEGCDILLDTSQTFVRQGSLIQLPSVERGKLSKVRLGSLSLKKEGERQCFLFTKHFLICTRSSGGKLHLLKQGGVLSLIECTLIEEPDANDEDAKNSGQVFGHLDFKIVVEPSDAPAFTVVLLAPSRQEKAAWTSDISQCIDNIRCNGLMTSVFEENSKVTVPHMIKSDARLHKDDVDICFSKTLNSCKVPQIRYASVERLLERLTDLRFLSIDFLNTFLHTYRIFTTATVVMEKLADIYKKPFTSIPVRSLELFFATNQNNRSGDHVNDKSPRLCRKFSSPPPLSISSRTSSPVRTRKLSLNSPIGSKVGILDLSTTSSSAASSPTSANPTISPPPSNNNNNSKPPLDLSRGQSPSSPEQSPGALDDNAEVPRIDALCGKLRRSIRRAVLESVSLDKFIPESPQASEPGEISPCRSPSTPRHLRYRQSGVQTAENSRCSVSPASAFAIATAAAGHSSPPVFNNSERTCDKEFIIRRAATNRVLNVLRHWVSKHSQDFEMNGELKMGVICLLEEVLRDPDLLPQERKATANILSALSQDDQDDAQLKIEDILQMAECPKAECFESLSAMEIAEQITLLDHIVFRSIPYEEFLGQGWMKTDKTERTPYIMKTSQHFNDMSNLVASQIMSHTDVGSRAGSIEKWVAVADICRCLNNYNGVLEITSALNRSAIYRLKKTWAKVCKQTKALMDKLQKTVSSEGRFKNLRETLKNCNPPCVPYLGMYLTDLAFIEEGTPNFTEEGLVNFSKMRMISHIIREIRQFQQTPYRIEHQPKVTQYLLDKTLIMDEDTLYDLSLKIEPRLPA.

Positions 22–129 (EGTKRGYLSK…WVEAIQQASY (108 aa)) constitute a PH 1 domain. Residues 147 to 189 (VQIVETEKVAANQLRTQLEDQDTEIERLKAEIIALNKTKERMR) are a coiled coil. The 30-residue stretch at 201 to 230 (DIKKIKKVQSFMRGWLCRRKWKIIVQDYIC) folds into the IQ domain. One can recognise a DH domain in the interval 239 to 425 (KRNQIVFNMV…EELSRVMHDE (187 aa)). Residues 466–584 (PSVERGKLSK…WTSDISQCID (119 aa)) form the PH 2 domain. In terms of domain architecture, N-terminal Ras-GEF spans 631 to 745 (KVPQIRYASV…PVRTRKLSLN (115 aa)). 3 disordered regions span residues 704–743 (NRSG…RKLS), 759–814 (TTSS…NAEV), and 843–879 (PESP…AENS). Residues 706 to 715 (SGDHVNDKSP) show a composition bias toward basic and acidic residues. Positions 728-743 (SISSRTSSPVRTRKLS) are enriched in polar residues. Low complexity-rich tracts occupy residues 759-774 (TTSS…ANPT) and 781-806 (NNNN…QSPG). A Ras-GEF domain is found at 1009–1241 (SAMEIAEQIT…YDLSLKIEPR (233 aa)).

The protein localises to the cytoplasm. It localises to the cell membrane. The protein resides in the endoplasmic reticulum membrane. Functions as a calcium-regulated nucleotide exchange factor activating both Ras and rac1 through the exchange of bound GDP for GTP. May function in synaptic plasticity. The protein is Ras-specific guanine nucleotide-releasing factor 2 (rasgrf2) of Danio rerio (Zebrafish).